Reading from the N-terminus, the 409-residue chain is Torsin-4A (409 aa).

Positions 1–16 (MGEQDPSDRLRGDQLK) are enriched in basic and acidic residues. Disordered regions lie at residues 1–28 (MGEQ…SFSQ) and 75–99 (DNLH…KGRV). The span at 17 to 28 (EPNQNGKGSFSQ) shows a compositional bias: polar residues. Residues 88–98 (PRKRKKKRKGR) show a composition bias toward basic residues. Residues 120 to 136 (CLYLLCIIVFLQVYNAI) form a helical membrane-spanning segment. 192-199 (GPTGVGKS) lines the ATP pocket.

It belongs to the ClpA/ClpB family. Torsin subfamily.

It is found in the membrane. This chain is Torsin-4A (tor4a), found in Danio rerio (Zebrafish).